A 400-amino-acid polypeptide reads, in one-letter code: Protein TFG (400 aa).

Met1 is subject to N-acetylmethionine. The PB1 domain occupies 10–91; it reads KLIIKAQLGE…RILKLTLFVN (82 aa). Residue Ser50 is modified to Phosphoserine. The stretch at 97-124 forms a coiled coil; sequence LESSQVKYLRRELIELRNKVNRLLDSLE. 2 disordered regions span residues 120–160 and 187–400; these read LDSL…STQV and LTDD…PGYR. Residues 150 to 160 are compositionally biased toward polar residues; the sequence is SDSSGKQSTQV. At Ser197 the chain carries Phosphoserine. 3 stretches are compositionally biased toward low complexity: residues 237–258, 265–298, and 307–327; these read GQIE…AQQP, PQQY…PTSQ, and QPQQ…YPAQ. Over residues 328 to 340 the composition is skewed to polar residues; sequence TYTAQTSQPTNYT. Omega-N-methylarginine occurs at positions 385 and 400.

Self-associates to form an oligomeric complex. Interacts with PDCD6; promoting localization and polymerization of TFG at endoplasmic reticulum exit site. Interacts with SEC16B. Ubiquitous.

Its subcellular location is the endoplasmic reticulum. Functionally, plays a role in the normal dynamic function of the endoplasmic reticulum (ER) and its associated microtubules. Required for secretory cargo traffic from the endoplasmic reticulum to the Golgi apparatus. The sequence is that of Protein TFG (TFG) from Homo sapiens (Human).